The following is a 484-amino-acid chain: ATP synthase subunit beta (484 aa).

An ATP-binding site is contributed by 162–169 (GGAGVGKT).

The protein belongs to the ATPase alpha/beta chains family. As to quaternary structure, F-type ATPases have 2 components, CF(1) - the catalytic core - and CF(0) - the membrane proton channel. CF(1) has five subunits: alpha(3), beta(3), gamma(1), delta(1), epsilon(1). CF(0) has four main subunits: a(1), b(1), b'(1) and c(9-12).

It is found in the cellular thylakoid membrane. The catalysed reaction is ATP + H2O + 4 H(+)(in) = ADP + phosphate + 5 H(+)(out). In terms of biological role, produces ATP from ADP in the presence of a proton gradient across the membrane. The catalytic sites are hosted primarily by the beta subunits. In Synechococcus elongatus (strain ATCC 33912 / PCC 7942 / FACHB-805) (Anacystis nidulans R2), this protein is ATP synthase subunit beta.